Here is a 229-residue protein sequence, read N- to C-terminus: UPF0758 protein Cbei_0490 (229 aa).

The region spanning 107–229 is the MPN domain; the sequence is KITSPKDLAS…FVSLKERGLI (123 aa). 3 residues coordinate Zn(2+): histidine 178, histidine 180, and aspartate 191. A JAMM motif motif is present at residues 178 to 191; it reads HNHPSGDPTPSRED.

This sequence belongs to the UPF0758 family.

The protein is UPF0758 protein Cbei_0490 of Clostridium beijerinckii (strain ATCC 51743 / NCIMB 8052) (Clostridium acetobutylicum).